The following is a 923-amino-acid chain: Transportin-3 (923 aa).

M1 carries the post-translational modification N-acetylmethionine. S74 bears the Phosphoserine mark. Phosphothreonine is present on T896.

As to quaternary structure, interacts with (GTP-bound) Ran. Interacts with (phosphorylated) SFRS1 and SFRS2; leading to their nuclear import. Interacts with NUP62. Interacts with RBM4. Interacts with CPSF6, promoting its nuclear import. In terms of assembly, (Microbial infection) Interacts with the HIV-1 pre-integration complex (PIC), which is composed of viral genome, matrix protein, Vpr and integrase. Interacts with HIV-1 integrase protein; the interaction is direct. As to expression, expressed in skeletal muscle.

Its subcellular location is the nucleus envelope. The protein resides in the cytoplasm. Functionally, importin, which transports target proteins into the nucleus. Specifically mediates the nuclear import of splicing factor serine/arginine (SR) proteins, such as RBM4, SFRS1 and SFRS2, by recognizing phosphorylated SR domains. Also mediates the nuclear import of serine/arginine (SR) protein CPSF6, independently of CPSF6 phosphorylation. The nuclear import process is regulated by the small GTPase Ran that partitions between cytoplasm and nucleus in the predominantly GDP- and GTP-bound form, respectively. Importin associates with target cargo proteins in the cytoplasm, and the competitive binding of GTP-bound Ran induces the release of cargos in the nucleus. Its function is as follows. (Microbial infection) Involved in immunodeficiency virus (HIV-1) infection by importing the pre-integration complex (PIC) into the nucleus. Required for a nuclear maturation step of HIV-1 prior to integration. This is Transportin-3 from Homo sapiens (Human).